A 213-amino-acid polypeptide reads, in one-letter code: Histidine biosynthesis bifunctional protein HisIE (213 aa).

A phosphoribosyl-AMP cyclohydrolase region spans residues 1–114 (MLTTEKYQGL…FHPALTDFSF (114 aa)). Residues 115 to 213 (LFQLENIISI…RVRSKLKKKH (99 aa)) form a phosphoribosyl-ATP pyrophosphohydrolase region.

It in the N-terminal section; belongs to the PRA-CH family. In the C-terminal section; belongs to the PRA-PH family.

The protein resides in the cytoplasm. It catalyses the reaction 1-(5-phospho-beta-D-ribosyl)-ATP + H2O = 1-(5-phospho-beta-D-ribosyl)-5'-AMP + diphosphate + H(+). It carries out the reaction 1-(5-phospho-beta-D-ribosyl)-5'-AMP + H2O = 1-(5-phospho-beta-D-ribosyl)-5-[(5-phospho-beta-D-ribosylamino)methylideneamino]imidazole-4-carboxamide. Its pathway is amino-acid biosynthesis; L-histidine biosynthesis; L-histidine from 5-phospho-alpha-D-ribose 1-diphosphate: step 2/9. The protein operates within amino-acid biosynthesis; L-histidine biosynthesis; L-histidine from 5-phospho-alpha-D-ribose 1-diphosphate: step 3/9. The sequence is that of Histidine biosynthesis bifunctional protein HisIE from Blochmanniella floridana.